The chain runs to 304 residues: Ribosomal RNA small subunit methyltransferase H (304 aa).

Residues 50–52 (GGH), aspartate 69, phenylalanine 97, aspartate 113, and glutamine 120 each bind S-adenosyl-L-methionine.

Belongs to the methyltransferase superfamily. RsmH family.

Its subcellular location is the cytoplasm. It carries out the reaction cytidine(1402) in 16S rRNA + S-adenosyl-L-methionine = N(4)-methylcytidine(1402) in 16S rRNA + S-adenosyl-L-homocysteine + H(+). Functionally, specifically methylates the N4 position of cytidine in position 1402 (C1402) of 16S rRNA. The polypeptide is Ribosomal RNA small subunit methyltransferase H (Rippkaea orientalis (strain PCC 8801 / RF-1) (Cyanothece sp. (strain PCC 8801))).